The sequence spans 469 residues: Siroheme synthase (469 aa).

Residues 1–211 are precorrin-2 dehydrogenase /sirohydrochlorin ferrochelatase; the sequence is MSTQLQTWDF…GRTDKARAML (211 aa). NAD(+)-binding positions include 29-30 and 50-51; these read EQ and DP. The residue at position 136 (Ser136) is a Phosphoserine. Residues 227 to 469 form a uroporphyrinogen-III C-methyltransferase region; it reads GEVYLVGAGP…TLRDRLRWMD (243 aa). Pro236 serves as a coordination point for S-adenosyl-L-methionine. The active-site Proton acceptor is Asp259. Catalysis depends on Lys281, which acts as the Proton donor. Residues 312-314, Ile317, 342-343, Met394, and Gly423 each bind S-adenosyl-L-methionine; these read GGD and TA.

The protein in the N-terminal section; belongs to the precorrin-2 dehydrogenase / sirohydrochlorin ferrochelatase family. In the C-terminal section; belongs to the precorrin methyltransferase family.

The catalysed reaction is uroporphyrinogen III + 2 S-adenosyl-L-methionine = precorrin-2 + 2 S-adenosyl-L-homocysteine + H(+). It carries out the reaction precorrin-2 + NAD(+) = sirohydrochlorin + NADH + 2 H(+). It catalyses the reaction siroheme + 2 H(+) = sirohydrochlorin + Fe(2+). Its pathway is cofactor biosynthesis; adenosylcobalamin biosynthesis; precorrin-2 from uroporphyrinogen III: step 1/1. The protein operates within cofactor biosynthesis; adenosylcobalamin biosynthesis; sirohydrochlorin from precorrin-2: step 1/1. It functions in the pathway porphyrin-containing compound metabolism; siroheme biosynthesis; precorrin-2 from uroporphyrinogen III: step 1/1. It participates in porphyrin-containing compound metabolism; siroheme biosynthesis; siroheme from sirohydrochlorin: step 1/1. Its pathway is porphyrin-containing compound metabolism; siroheme biosynthesis; sirohydrochlorin from precorrin-2: step 1/1. Its function is as follows. Multifunctional enzyme that catalyzes the SAM-dependent methylations of uroporphyrinogen III at position C-2 and C-7 to form precorrin-2 via precorrin-1. Then it catalyzes the NAD-dependent ring dehydrogenation of precorrin-2 to yield sirohydrochlorin. Finally, it catalyzes the ferrochelation of sirohydrochlorin to yield siroheme. The polypeptide is Siroheme synthase (Hahella chejuensis (strain KCTC 2396)).